A 228-amino-acid polypeptide reads, in one-letter code: Phosphoenolpyruvate guanylyltransferase (228 aa).

Phosphoenolpyruvate contacts are provided by Thr148, Gly164, and Ser167.

It belongs to the CofC family.

It carries out the reaction phosphoenolpyruvate + GTP + H(+) = enolpyruvoyl-2-diphospho-5'-guanosine + diphosphate. The protein operates within cofactor biosynthesis; coenzyme F420 biosynthesis. In terms of biological role, guanylyltransferase that catalyzes the activation of phosphoenolpyruvate (PEP) as enolpyruvoyl-2-diphospho-5'-guanosine, via the condensation of PEP with GTP. It is involved in the biosynthesis of coenzyme F420, a hydride carrier cofactor. This chain is Phosphoenolpyruvate guanylyltransferase, found in Thermomonospora curvata (strain ATCC 19995 / DSM 43183 / JCM 3096 / KCTC 9072 / NBRC 15933 / NCIMB 10081 / Henssen B9).